Reading from the N-terminus, the 249-residue chain is Methylthioribulose-1-phosphate dehydratase (249 aa).

2 residues coordinate Zn(2+): His103 and His105.

This sequence belongs to the aldolase class II family. MtnB subfamily. It depends on Zn(2+) as a cofactor.

It catalyses the reaction 5-(methylsulfanyl)-D-ribulose 1-phosphate = 5-methylsulfanyl-2,3-dioxopentyl phosphate + H2O. The protein operates within amino-acid biosynthesis; L-methionine biosynthesis via salvage pathway; L-methionine from S-methyl-5-thio-alpha-D-ribose 1-phosphate: step 2/6. Its function is as follows. Catalyzes the dehydration of methylthioribulose-1-phosphate (MTRu-1-P) into 2,3-diketo-5-methylthiopentyl-1-phosphate (DK-MTP-1-P). The sequence is that of Methylthioribulose-1-phosphate dehydratase from Leptospira interrogans serogroup Icterohaemorrhagiae serovar copenhageni (strain Fiocruz L1-130).